A 493-amino-acid polypeptide reads, in one-letter code: Ketol-acid reductoisomerase (NADP(+)) (493 aa).

In terms of domain architecture, KARI N-terminal Rossmann spans 15–208 (AQLGKCRFMQ…GGDRAGVLES (194 aa)). NADP(+)-binding positions include 45–48 (CGAQ), R68, R76, S78, and 108–110 (DKQ). The active site involves H132. G158 contributes to the NADP(+) binding site. KARI C-terminal knotted domains follow at residues 209 to 344 (SFVA…NAPA) and 345 to 486 (FAGK…MKDM). Residues D217, E221, E389, and E393 each contribute to the Mg(2+) site. S414 is a binding site for substrate.

This sequence belongs to the ketol-acid reductoisomerase family. It depends on Mg(2+) as a cofactor.

It catalyses the reaction (2R)-2,3-dihydroxy-3-methylbutanoate + NADP(+) = (2S)-2-acetolactate + NADPH + H(+). The enzyme catalyses (2R,3R)-2,3-dihydroxy-3-methylpentanoate + NADP(+) = (S)-2-ethyl-2-hydroxy-3-oxobutanoate + NADPH + H(+). The protein operates within amino-acid biosynthesis; L-isoleucine biosynthesis; L-isoleucine from 2-oxobutanoate: step 2/4. Its pathway is amino-acid biosynthesis; L-valine biosynthesis; L-valine from pyruvate: step 2/4. Involved in the biosynthesis of branched-chain amino acids (BCAA). Catalyzes an alkyl-migration followed by a ketol-acid reduction of (S)-2-acetolactate (S2AL) to yield (R)-2,3-dihydroxy-isovalerate. In the isomerase reaction, S2AL is rearranged via a Mg-dependent methyl migration to produce 3-hydroxy-3-methyl-2-ketobutyrate (HMKB). In the reductase reaction, this 2-ketoacid undergoes a metal-dependent reduction by NADPH to yield (R)-2,3-dihydroxy-isovalerate. The polypeptide is Ketol-acid reductoisomerase (NADP(+)) (Aeromonas hydrophila subsp. hydrophila (strain ATCC 7966 / DSM 30187 / BCRC 13018 / CCUG 14551 / JCM 1027 / KCTC 2358 / NCIMB 9240 / NCTC 8049)).